A 377-amino-acid polypeptide reads, in one-letter code: Ribosomal RNA large subunit methyltransferase G (377 aa).

Belongs to the methyltransferase superfamily. RlmG family.

The protein resides in the cytoplasm. It catalyses the reaction guanosine(1835) in 23S rRNA + S-adenosyl-L-methionine = N(2)-methylguanosine(1835) in 23S rRNA + S-adenosyl-L-homocysteine + H(+). Its function is as follows. Specifically methylates the guanine in position 1835 (m2G1835) of 23S rRNA. This chain is Ribosomal RNA large subunit methyltransferase G, found in Shewanella sp. (strain MR-4).